Reading from the N-terminus, the 37-residue chain is Small ribosomal subunit protein eS32 (37 aa).

Belongs to the eukaryotic ribosomal protein eS32 family. Part of the small ribosomal subunit.

This chain is Small ribosomal subunit protein eS32, found in Pyrococcus furiosus (strain ATCC 43587 / DSM 3638 / JCM 8422 / Vc1).